A 319-amino-acid chain; its full sequence is Protoheme IX farnesyltransferase (319 aa).

8 consecutive transmembrane segments (helical) span residues 59–79 (IGLI…AGAF), 108–128 (EALV…WFGA), 131–151 (LSAW…TIIL), 158–178 (NIVW…AAVT), 183–203 (WPAI…YWPL), 232–252 (VVLY…AGGA), 254–274 (WVYT…SHAL), and 299–319 (LTLL…VIGG).

This sequence belongs to the UbiA prenyltransferase family. Protoheme IX farnesyltransferase subfamily.

It localises to the cell membrane. It carries out the reaction heme b + (2E,6E)-farnesyl diphosphate + H2O = Fe(II)-heme o + diphosphate. It participates in porphyrin-containing compound metabolism; heme O biosynthesis; heme O from protoheme: step 1/1. Functionally, converts heme B (protoheme IX) to heme O by substitution of the vinyl group on carbon 2 of heme B porphyrin ring with a hydroxyethyl farnesyl side group. In Pseudarthrobacter chlorophenolicus (strain ATCC 700700 / DSM 12829 / CIP 107037 / JCM 12360 / KCTC 9906 / NCIMB 13794 / A6) (Arthrobacter chlorophenolicus), this protein is Protoheme IX farnesyltransferase.